The following is a 105-amino-acid chain: UPF0235 protein A1C_06510 (105 aa).

It belongs to the UPF0235 family.

The protein is UPF0235 protein A1C_06510 of Rickettsia akari (strain Hartford).